The sequence spans 327 residues: 2-methoxy-6-polyprenyl-1,4-benzoquinol methylase, mitochondrial (327 aa).

A mitochondrion-targeting transit peptide spans 1–42 (MAAPGSCALWSYCGRGWSRAMRGCQLLGLRSSWPGDLLSARL). Residues threonine 117, aspartate 171, and 199–200 (DA) each bind S-adenosyl-L-methionine.

This sequence belongs to the class I-like SAM-binding methyltransferase superfamily. MenG/UbiE family. Component of a multi-subunit COQ enzyme complex, composed of at least COQ3, COQ4, COQ5, COQ6, COQ7 and COQ9. Interacts with PYURF; the interaction is direct, stabilizes COQ5 protein and associates PYURF with COQ enzyme complex. Widely expressed, with highest levels in liver, lung, placenta and skeletal muscle.

It is found in the mitochondrion inner membrane. The enzyme catalyses 2-methoxy-6-(all-trans-decaprenyl)benzene-1,4-diol + S-adenosyl-L-methionine = 5-methoxy-2-methyl-3-(all-trans-decaprenyl)benzene-1,4-diol + S-adenosyl-L-homocysteine + H(+). It functions in the pathway cofactor biosynthesis; ubiquinone biosynthesis. Methyltransferase required for the conversion of 2-decaprenyl-6-methoxy-1,4-benzoquinol (DDMQH2) to 2-decaprenyl-3-methyl-6-methoxy-1,4-benzoquinol (DMQH2). This Homo sapiens (Human) protein is 2-methoxy-6-polyprenyl-1,4-benzoquinol methylase, mitochondrial.